The primary structure comprises 84 residues: MSRIRRMRDLDSNPCLEETDASTKCMDENQYQKDLCTSYFIKYKNCRKFWNGIMITRRREGTVPYMPAAEERKQILESLESLPY.

Residues Ser12–Met54 enclose the CHCH domain. 2 consecutive short sequence motifs (cx9C motif) follow at residues Cys15–Cys25 and Cys36–Cys46. Cystine bridges form between Cys15-Cys46 and Cys25-Cys36.

It belongs to the CHCHD7 family.

It is found in the mitochondrion intermembrane space. This is Coiled-coil-helix-coiled-coil-helix domain-containing protein 7 (chchd7) from Xenopus laevis (African clawed frog).